We begin with the raw amino-acid sequence, 340 residues long: Heat-inducible transcription repressor HrcA (340 aa).

Belongs to the HrcA family.

Its function is as follows. Negative regulator of class I heat shock genes (grpE-dnaK-dnaJ and groELS operons). Prevents heat-shock induction of these operons. This is Heat-inducible transcription repressor HrcA from Phytoplasma australiense.